The following is a 1116-amino-acid chain: MSLNLSAEEQTAFDQLFKIADKQDIGVITGEEAVPFLEKSGLAPQVLGQIWQIADAENRGFLTFSGFVIAMRLVALAQEKLPFDYKKSGKIPYFADIHISGVDSSKFVQLNRPNNVSSGDGSDGSFLPPISSDEMTRYQQMFTTVCPTDGLMDGDRASSIFGRAPLSTEILARVWNLVDTHKRGALDIREFNTGMHIINLLLNGSLKSPPVSISPSFIASAASTSSVSAPSQYPGLSRSPPVQAPNIPVSDPWAIPSQDLTSFCQLFSNVDKAHKGYVSGSEAYSFFLASKLPEDVLAQIWDLSDTNSNGKLNIGEFCISLYLIKLKLSGKELPKVLPSSMLSSVAPLMQKSKSVPTSIPSVVPANISSPNPNPTLAPNPTGPSRVTSGTEDLLSLDATPFSPTLAPQHTSSNATKHSAPPVTKSAPFPVVSPLQLNHTPGFPTSPAAKPNSPTSTFFPQSSFGQTIAKNTMDKPSAVRTSVPSQLAAPIPQVASAEQLKLAAEVPKLESQLSQVKKSNDDLQKSSRDVAANLSDVKAKVSEIRKAYDEELAKAKQISLDIETNKAQTEQVNREYSILEATLNALQKQNKQKGEVLEQVVAESEAAKNMVESSNASIQQLKSEVADKEQTLAQLHLQLDEMTQRLVSLDEESKAVSQRKLDLEYKINNSKTQLATATEEYHEHSKQLEAEKQELSKLEDGLKSVNLTEEAPKPEVDSTPRFPSFTSNGITTDKPTLPDTTSSVPTQHNSFDAMHNTLRSPSLNSNNSSAHASTVSRNPFHNLKISGASSPVSNFWESEFASAVFPRSISKTTSLSVNNSSVNPSLDSEPVQLSNMEEPQHQDSSVVDVSTSASQRGSPVLSDLSKLTGSARNTAEPVENTSAEPIENTSAPTPFEIANKQQATEPISAPFATETISTPAPVKPPVPPSRRDRSAQDGVVQQATPHIQDEFPPIQFNEIDDDESSSDEEPPMSNLSPQISIGSVTNYTSAVTELPDPNHQLEMSTTTHVQHPNSETIPSSTENQYFDTTSGAFEANSNTEVTVNSNEVSQPFDFDTANESDNDDDELPVQQVVSGSLANDAFNVDDEFDNQFANLQAAEIKDDDNSSTDEEEHAGHH.

EF-hand domains follow at residues 8–43 (EEQTAFDQLFKIADKQDIGVITGEEAVPFLEKSGLA), 42–77 (LAPQVLGQIWQIADAENRGFLTFSGFVIAMRLVALA), 166–201 (LSTEILARVWNLVDTHKRGALDIREFNTGMHIINLL), and 292–327 (LPEDVLAQIWDLSDTNSNGKLNIGEFCISLYLIKLK). EH domains lie at 9–106 (EQTA…DSSK), 134–224 (EMTR…AAST), and 259–348 (DLTS…VAPL). Residues Asp305, Asn307, Asn309, Lys311, and Glu316 each coordinate Ca(2+). Disordered stretches follow at residues 360-454 (PSVV…NSPT), 703-774 (SVNL…ASTV), 812-890 (TSLS…NTSA), 909-978 (PFAT…SPQI), 1004-1024 (TTTHVQHPNSETIPSSTENQY), 1044-1066 (SNEVSQPFDFDTANESDNDDDEL), and 1095-1116 (QAAEIKDDDNSSTDEEEHAGHH). The segment covering 371-381 (NPNPTLAPNPT) has biased composition (pro residues). The segment covering 401–416 (FSPTLAPQHTSSNATK) has biased composition (polar residues). The stretch at 565-707 (KAQTEQVNRE…EDGLKSVNLT (143 aa)) forms a coiled coil. The span at 723-749 (SFTSNGITTDKPTLPDTTSSVPTQHNS) shows a compositional bias: polar residues. Low complexity-rich tracts occupy residues 755–774 (NTLRSPSLNSNNSSAHASTV) and 812–827 (TSLSVNNSSVNPSLDS). The span at 864–890 (SKLTGSARNTAEPVENTSAEPIENTSA) shows a compositional bias: polar residues. Positions 957–969 (EIDDDESSSDEEP) are enriched in acidic residues. Acidic residues-rich tracts occupy residues 1055–1066 (TANESDNDDDEL) and 1104–1116 (NSSTDEEEHAGHH).

The protein localises to the cytoplasm. It is found in the cytoskeleton. This is an uncharacterized protein from Schizosaccharomyces pombe (strain 972 / ATCC 24843) (Fission yeast).